The following is a 156-amino-acid chain: Insulin (156 aa).

Positions 1–31 (MSKFLLQSHSANACLLTLLLTLASNLDISLA) are cleaved as a signal peptide. 4 disulfide bridges follow: Cys-37–Cys-114, Cys-49–Cys-119, Cys-61–Cys-128, and Cys-112–Cys-115. A propeptide spans 79–93 (DTENVNDKLRGILLN) (c peptide beta). Positions 96 to 102 (EAFSYLT) are cleaved as a propeptide — c peptide alpha. Residues 141 to 156 (TGRSNSGHAQLEDNFS) constitute a propeptide, d peptide. Residues 144–156 (SNSGHAQLEDNFS) constitute a propeptide, d peptide short form. Glu-152 is modified (4-carboxyglutamate).

Belongs to the insulin family. In terms of assembly, heterodimer of a B chain or a B chain' and an A chain probably linked by three disulfide bonds. In terms of tissue distribution, expressed in the central region of the cerebral ganglia mostly within the F and C clusters.

The protein localises to the secreted. Involved in glucose metabolism. The protein is Insulin (PIN) of Aplysia californica (California sea hare).